Reading from the N-terminus, the 335-residue chain is Dolichyl-diphosphooligosaccharide--protein glycosyltransferase subunit MAGT1 (335 aa).

Residues Met1 to Ala29 form the signal peptide. Residues Gln30–Pro184 are Extracellular-facing. The Thioredoxin domain maps to Trp47 to Asp175. Residue Asn71 is glycosylated (N-linked (GlcNAc...) asparagine). The cysteines at positions 87 and 90 are disulfide-linked. Residues Asn185–Leu205 form a helical membrane-spanning segment. Residues Arg206–Asn209 are Cytoplasmic-facing. A helical membrane pass occupies residues Met210–Met230. The Extracellular portion of the chain corresponds to Thr231–His270. A helical membrane pass occupies residues Ile271 to Ala291. Residues Ser292–Arg300 are Cytoplasmic-facing. Residues Met301–Phe321 form a helical membrane-spanning segment. Topologically, residues Arg322–Ser335 are extracellular.

The protein belongs to the OST3/OST6 family. As to quaternary structure, accessory component of the STT3B-containing form of the oligosaccharyltransferase (OST) complex. OST exists in two different complex forms which contain common core subunits RPN1, RPN2, OST48, OST4, DAD1 and TMEM258, either STT3A or STT3B as catalytic subunits, and form-specific accessory subunits. OST can form stable complexes with the Sec61 complex or with both the Sec61 and TRAP complexes. The association of TUSC3 or MAGT1 with the STT3B-containing complex seems to be mutually exclusvice.

The protein localises to the cell membrane. It localises to the endoplasmic reticulum. The protein resides in the endoplasmic reticulum membrane. The protein operates within protein modification; protein glycosylation. Accessory component of the STT3B-containing form of the N-oligosaccharyl transferase (OST) complex which catalyzes the transfer of a high mannose oligosaccharide from a lipid-linked oligosaccharide donor to an asparagine residue within an Asn-X-Ser/Thr consensus motif in nascent polypeptide chains. Involved in N-glycosylation of STT3B-dependent substrates. Specifically required for the glycosylation of a subset of acceptor sites that are near cysteine residues; in this function seems to act redundantly with TUSC3. In its oxidized form proposed to form transient mixed disulfides with a glycoprotein substrate to facilitate access of STT3B to the unmodified acceptor site. Also has oxidoreductase-independent functions in the STT3B-containing OST complex possibly involving substrate recognition. Could indirectly play a role in Mg(2+) transport in epithelial cells. The polypeptide is Dolichyl-diphosphooligosaccharide--protein glycosyltransferase subunit MAGT1 (Rattus norvegicus (Rat)).